The chain runs to 363 residues: Zinc phosphodiesterase ELAC protein 1 (363 aa).

H62, H64, D66, H67, H182, D253, and H313 together coordinate Zn(2+). The Proton acceptor role is filled by D66.

It belongs to the RNase Z family. In terms of assembly, homodimer. It depends on Zn(2+) as a cofactor. In terms of tissue distribution, widely expressed. Expressed in heart, brain, placenta, lung, liver, skeletal muscle, kidney and pancreas.

It localises to the cytoplasm. The protein resides in the cytosol. It is found in the nucleus. The catalysed reaction is Endonucleolytic cleavage of RNA, removing extra 3' nucleotides from tRNA precursor, generating 3' termini of tRNAs. A 3'-hydroxy group is left at the tRNA terminus and a 5'-phosphoryl group is left at the trailer molecule.. In terms of biological role, zinc phosphodiesterase, which displays some tRNA 3'-processing endonuclease activity. Specifically involved in tRNA repair: acts downstream of the ribosome-associated quality control (RQC) pathway by removing a 2',3'-cyclic phosphate from tRNAs following cleavage by ANKZF1. tRNAs are then processed by TRNT1. The polypeptide is Zinc phosphodiesterase ELAC protein 1 (Homo sapiens (Human)).